The sequence spans 98 residues: Co-chaperonin GroES (98 aa).

This sequence belongs to the GroES chaperonin family. Heptamer of 7 subunits arranged in a ring. Interacts with the chaperonin GroEL.

It localises to the cytoplasm. Its function is as follows. Together with the chaperonin GroEL, plays an essential role in assisting protein folding. The GroEL-GroES system forms a nano-cage that allows encapsulation of the non-native substrate proteins and provides a physical environment optimized to promote and accelerate protein folding. GroES binds to the apical surface of the GroEL ring, thereby capping the opening of the GroEL channel. The sequence is that of Co-chaperonin GroES from Paenarthrobacter aurescens (strain TC1).